A 128-amino-acid polypeptide reads, in one-letter code: Ribonuclease pancreatic (128 aa).

A disordered region spans residues 1–20 (KETAAMKFQRQHMDSGSSLS). 2 residues coordinate substrate: K7 and R10. H12 acts as the Proton acceptor in catalysis. Cystine bridges form between C26–C84, C40–C95, C58–C110, and C65–C72. N-linked (GlcNAc...) asparagine glycosylation occurs at N34. Residues 41 to 45 (KPVNT), K66, and R85 each bind substrate. Residue H119 is the Proton donor of the active site.

The protein belongs to the pancreatic ribonuclease family. As to quaternary structure, monomer. Interacts with and forms tight 1:1 complexes with RNH1. Dimerization of two such complexes may occur. Interaction with RNH1 inhibits this protein. Pancreas.

The protein localises to the secreted. It catalyses the reaction an [RNA] containing cytidine + H2O = an [RNA]-3'-cytidine-3'-phosphate + a 5'-hydroxy-ribonucleotide-3'-[RNA].. The enzyme catalyses an [RNA] containing uridine + H2O = an [RNA]-3'-uridine-3'-phosphate + a 5'-hydroxy-ribonucleotide-3'-[RNA].. In terms of biological role, endonuclease that catalyzes the cleavage of RNA on the 3' side of pyrimidine nucleotides. Acts on single-stranded and double-stranded RNA. This chain is Ribonuclease pancreatic (RNASE1), found in Choloepus hoffmanni (Hoffmann's two-fingered sloth).